Here is a 379-residue protein sequence, read N- to C-terminus: MKILRKNHPLFKIINHSFIDLPTPSNISSWWNFGSLLGMCLMIQILTGLFLAMHYTSDTTTAFSSVAHICRDVNYGWLIRYLHANGASMFFICLFIHVGRGIYYGSYVLSETWNIGIILFFTTMATAFVGYVLPWGQMSFWGATVITNLLSAIPYIGSMLVEWIWGGFSVDKATLTRFFAFHFILPFIITAFVLVHLLFLHETGSNNPSGLNSNSDKIPFHPYYTIKDLLGILFLLMALMILALFFPDILGDPDNYTPANPLNTPAHIKPEWYFLFAYAILRSIPNKLGGVLALLLSILILMAFPLLNTSKQHGLIFRPITQIIYWILIANLLVLTWIGGQPVEYPFTMIGQIASITYFTIILILMPVSNTIENNIIKL.

The next 4 membrane-spanning stretches (helical) occupy residues 33-53, 77-98, 113-133, and 178-198; these read FGSL…FLAM, WLIR…FIHV, WNIG…GYVL, and FFAF…VHLL. 2 residues coordinate heme b: His-83 and His-97. Residues His-182 and His-196 each coordinate heme b. His-201 contacts a ubiquinone. A run of 4 helical transmembrane segments spans residues 226 to 246, 288 to 308, 320 to 340, and 347 to 367; these read IKDL…ALFF, LGGV…PLLN, ITQI…WIGG, and FTMI…ILMP.

It belongs to the cytochrome b family. As to quaternary structure, the cytochrome bc1 complex contains 11 subunits: 3 respiratory subunits (MT-CYB, CYC1 and UQCRFS1), 2 core proteins (UQCRC1 and UQCRC2) and 6 low-molecular weight proteins (UQCRH/QCR6, UQCRB/QCR7, UQCRQ/QCR8, UQCR10/QCR9, UQCR11/QCR10 and a cleavage product of UQCRFS1). This cytochrome bc1 complex then forms a dimer. Heme b is required as a cofactor.

Its subcellular location is the mitochondrion inner membrane. Component of the ubiquinol-cytochrome c reductase complex (complex III or cytochrome b-c1 complex) that is part of the mitochondrial respiratory chain. The b-c1 complex mediates electron transfer from ubiquinol to cytochrome c. Contributes to the generation of a proton gradient across the mitochondrial membrane that is then used for ATP synthesis. The sequence is that of Cytochrome b (MT-CYB) from Akodon dayi (Day's grass mouse).